Here is a 394-residue protein sequence, read N- to C-terminus: Deoxyguanosinetriphosphate triphosphohydrolase-like protein (394 aa).

Positions 1-36 are disordered; sequence MSQAPYFVPRAPYAEDPSKSKGRRFKEDESRTRTPF. Basic and acidic residues predominate over residues 25-36; it reads FKEDESRTRTPF. The HD domain occupies 70-210; sequence RLTHTLEVAQ…AALADDIAYN (141 aa).

The protein belongs to the dGTPase family. Type 2 subfamily.

The protein is Deoxyguanosinetriphosphate triphosphohydrolase-like protein of Caulobacter vibrioides (strain ATCC 19089 / CIP 103742 / CB 15) (Caulobacter crescentus).